A 342-amino-acid polypeptide reads, in one-letter code: uncharacterized protein (342 aa).

Belongs to the cycloisomerase 2 family.

This is an uncharacterized protein from Staphylococcus epidermidis (strain ATCC 12228 / FDA PCI 1200).